The chain runs to 152 residues: Keratin, high-sulfur matrix protein, B2C (152 aa).

N-acetylalanine is present on Ala-2. 3 repeats span residues 27-36, 37-46, and 47-56; these read STCSQTSCCQ, PTSIQTSCCQ, and PTCLQTSGCE.

The keratin products of mammalian epidermal derivatives such as wool and hair consist of microfibrils embedded in a rigid matrix of other proteins. The matrix proteins include the high-sulfur and high-tyrosine keratins, having molecular weights of 6-20 kDa, whereas the microfibrils contain the larger, low-sulfur keratins (40-56 kDa). The sequence is that of Keratin, high-sulfur matrix protein, B2C from Ovis aries (Sheep).